Consider the following 120-residue polypeptide: NAD(P)H-quinone oxidoreductase subunit 3, chloroplastic (120 aa).

Transmembrane regions (helical) follow at residues 9–29, 64–84, and 88–108; these read IFWAFLIISSVIPILAFLISG, MFALVFVVFDVETVFLYPWAM, and VLGVSVFIEALIFVLILIVGL.

The protein belongs to the complex I subunit 3 family. As to quaternary structure, NDH is composed of at least 16 different subunits, 5 of which are encoded in the nucleus.

Its subcellular location is the plastid. The protein localises to the chloroplast thylakoid membrane. It catalyses the reaction a plastoquinone + NADH + (n+1) H(+)(in) = a plastoquinol + NAD(+) + n H(+)(out). The catalysed reaction is a plastoquinone + NADPH + (n+1) H(+)(in) = a plastoquinol + NADP(+) + n H(+)(out). NDH shuttles electrons from NAD(P)H:plastoquinone, via FMN and iron-sulfur (Fe-S) centers, to quinones in the photosynthetic chain and possibly in a chloroplast respiratory chain. The immediate electron acceptor for the enzyme in this species is believed to be plastoquinone. Couples the redox reaction to proton translocation, and thus conserves the redox energy in a proton gradient. This chain is NAD(P)H-quinone oxidoreductase subunit 3, chloroplastic, found in Populus alba (White poplar).